Reading from the N-terminus, the 407-residue chain is Bifunctional enzyme IspD/IspF (407 aa).

The segment at 1–246 (MTEASENASA…SSERTHFPDI (246 aa)) is 2-C-methyl-D-erythritol 4-phosphate cytidylyltransferase. Residues 247 to 407 (RTGNGYDVHA…SVVFPGEVPE (161 aa)) are 2-C-methyl-D-erythritol 2,4-cyclodiphosphate synthase. The a divalent metal cation site is built by Asp253 and His255. 4-CDP-2-C-methyl-D-erythritol 2-phosphate is bound by residues 253 to 255 (DVH) and 279 to 280 (HS). Position 287 (His287) interacts with a divalent metal cation. Residues 301–303 (DIG), 377–380 (TTNE), Phe384, and Arg387 each bind 4-CDP-2-C-methyl-D-erythritol 2-phosphate.

This sequence in the N-terminal section; belongs to the IspD/TarI cytidylyltransferase family. IspD subfamily. The protein in the C-terminal section; belongs to the IspF family. Requires a divalent metal cation as cofactor.

The enzyme catalyses 2-C-methyl-D-erythritol 4-phosphate + CTP + H(+) = 4-CDP-2-C-methyl-D-erythritol + diphosphate. The catalysed reaction is 4-CDP-2-C-methyl-D-erythritol 2-phosphate = 2-C-methyl-D-erythritol 2,4-cyclic diphosphate + CMP. Its pathway is isoprenoid biosynthesis; isopentenyl diphosphate biosynthesis via DXP pathway; isopentenyl diphosphate from 1-deoxy-D-xylulose 5-phosphate: step 2/6. The protein operates within isoprenoid biosynthesis; isopentenyl diphosphate biosynthesis via DXP pathway; isopentenyl diphosphate from 1-deoxy-D-xylulose 5-phosphate: step 4/6. Its function is as follows. Bifunctional enzyme that catalyzes the formation of 4-diphosphocytidyl-2-C-methyl-D-erythritol from CTP and 2-C-methyl-D-erythritol 4-phosphate (MEP) (IspD), and catalyzes the conversion of 4-diphosphocytidyl-2-C-methyl-D-erythritol 2-phosphate (CDP-ME2P) to 2-C-methyl-D-erythritol 2,4-cyclodiphosphate (ME-CPP) with a corresponding release of cytidine 5-monophosphate (CMP) (IspF). The polypeptide is Bifunctional enzyme IspD/IspF (Mesorhizobium japonicum (strain LMG 29417 / CECT 9101 / MAFF 303099) (Mesorhizobium loti (strain MAFF 303099))).